The following is a 287-amino-acid chain: ATP synthase gamma chain (287 aa).

It belongs to the ATPase gamma chain family. As to quaternary structure, F-type ATPases have 2 components, CF(1) - the catalytic core - and CF(0) - the membrane proton channel. CF(1) has five subunits: alpha(3), beta(3), gamma(1), delta(1), epsilon(1). CF(0) has three main subunits: a, b and c.

It is found in the cell inner membrane. Its function is as follows. Produces ATP from ADP in the presence of a proton gradient across the membrane. The gamma chain is believed to be important in regulating ATPase activity and the flow of protons through the CF(0) complex. The polypeptide is ATP synthase gamma chain (Hahella chejuensis (strain KCTC 2396)).